A 557-amino-acid chain; its full sequence is Formate--tetrahydrofolate ligase (557 aa).

Residue 65 to 72 (SPAGEGKT) coordinates ATP.

Belongs to the formate--tetrahydrofolate ligase family.

The enzyme catalyses (6S)-5,6,7,8-tetrahydrofolate + formate + ATP = (6R)-10-formyltetrahydrofolate + ADP + phosphate. It functions in the pathway one-carbon metabolism; tetrahydrofolate interconversion. This Methylobacillus flagellatus (strain ATCC 51484 / DSM 6875 / VKM B-1610 / KT) protein is Formate--tetrahydrofolate ligase.